We begin with the raw amino-acid sequence, 112 residues long: DNA-binding protein Memar_1972 (112 aa).

The disordered stretch occupies residues 14–35 (MEQMQRQAMDQQGMEEEAARQQ).

This sequence belongs to the PDCD5 family.

This chain is DNA-binding protein Memar_1972, found in Methanoculleus marisnigri (strain ATCC 35101 / DSM 1498 / JR1).